Here is a 119-residue protein sequence, read N- to C-terminus: Putative membrane protein insertion efficiency factor (119 aa).

Belongs to the UPF0161 family.

Its subcellular location is the cell inner membrane. In terms of biological role, could be involved in insertion of integral membrane proteins into the membrane. The chain is Putative membrane protein insertion efficiency factor from Agrobacterium fabrum (strain C58 / ATCC 33970) (Agrobacterium tumefaciens (strain C58)).